Reading from the N-terminus, the 352-residue chain is Rhodopsin, freshwater form (352 aa).

At 1–36 (MNGTEGPNFYVPMSNVTGVVRSPFEYPQYYLAEPWA) the chain is on the extracellular side. N2 and N15 each carry an N-linked (GlcNAc...) asparagine glycan. The helical transmembrane segment at 37–61 (YSALAAYMFFLIIAGFPINFLTLYV) threads the bilayer. The Cytoplasmic segment spans residues 62 to 73 (TIEHKKLRTPLN). The helical transmembrane segment at 74–98 (YILLNLAVADLFMVFGGFTTTMYTS) threads the bilayer. Over 99-113 (MHGYFVFGPTGCNIE) the chain is Extracellular. A disulfide bridge links C110 with C187. The chain crosses the membrane as a helical span at residues 114–133 (GFFATLGGEIALWCLVVLAV). At 134-152 (ERWMVVCKPMSNFRFGENH) the chain is on the cytoplasmic side. A helical membrane pass occupies residues 153 to 176 (AIMGVAFTWVMALACAAPPLFGWS). The Extracellular portion of the chain corresponds to 177-202 (RYIPEGMQCSCGMDHYAPNPETYNES). N200 carries an N-linked (GlcNAc...) asparagine glycan. The chain crosses the membrane as a helical span at residues 203-230 (FVIYMFICHFTIPLTVISFCYGRLVCTV). The Cytoplasmic segment spans residues 231–252 (KEATAQQQESETTQRAEREVTR). Residues 253 to 276 (MVIIMVISFLVCWVPYASVAWYIF) traverse the membrane as a helical segment. Residues 277–284 (THQGSSFG) lie on the Extracellular side of the membrane. A helical transmembrane segment spans residues 285-309 (PIFMTIPAFFAKSSSLYNPLIYICM). K296 is subject to N6-(retinylidene)lysine. Over 310 to 352 (NKQSRNCMITTLCCGKNPFEEEEGASTTASKTEASSVSSVSPA) the chain is Cytoplasmic. Residue C323 is the site of S-palmitoyl cysteine attachment. The tract at residues 330 to 352 (EEEGASTTASKTEASSVSSVSPA) is disordered. The span at 334–352 (ASTTASKTEASSVSSVSPA) shows a compositional bias: low complexity.

It belongs to the G-protein coupled receptor 1 family. Opsin subfamily. Post-translationally, phosphorylated on some or all of the serine and threonine residues present in the C-terminal region. In terms of tissue distribution, rod shaped photoreceptor cells which mediates vision in dim light.

The protein resides in the membrane. Visual pigments such as rhodopsin and porphyropsin are light-absorbing molecules that mediate vision. Rhodopsin consists of an apoprotein, opsin, covalently linked to 11-cis-retinal. This receptor is coupled to the activation of phospholipase C. Porphyropsin consists of opsin covalently linked to 11-cis 3,4-didehydroretinal. This chain is Rhodopsin, freshwater form, found in Anguilla anguilla (European freshwater eel).